We begin with the raw amino-acid sequence, 546 residues long: ATP-dependent rRNA helicase RRP3 (546 aa).

A disordered region spans residues 1 to 108 (MSDFKRRKLE…DEEAEAQAAA (108 aa)). Acidic residues-rich tracts occupy residues 60 to 77 (SEED…EEED) and 94 to 103 (EAEQSDEEAE). The Q motif motif lies at 115–143 (KTFADLGVREELCDACENLGYKTATPIQT). Positions 146-318 (IPLALAGKDI…RAALKNPVRV (173 aa)) constitute a Helicase ATP-binding domain. 159-166 (AETGSGKT) contacts ATP. The DEAD box motif lies at 265–268 (DEAD). In terms of domain architecture, Helicase C-terminal spans 342–490 (YKDLYLIHLL…EEKVSRDEVM (149 aa)). The segment covering 504–515 (VREMKDLHDQRK) has biased composition (basic and acidic residues). Positions 504 to 546 (VREMKDLHDQRKSGRGGRGGGRGGGRGGRGRGGRRDNMDMDEG) are disordered. Residues 519 to 530 (GGRGGGRGGGRG) show a composition bias toward gly residues. The segment covering 536-546 (GRRDNMDMDEG) has biased composition (basic and acidic residues).

The protein belongs to the DEAD box helicase family. DDX47/RRP3 subfamily. In terms of assembly, interacts with the SSU processome.

The protein resides in the nucleus. It catalyses the reaction ATP + H2O = ADP + phosphate + H(+). Functionally, ATP-dependent rRNA helicase required for pre-ribosomal RNA processing. Involved in the maturation of the 35S-pre-rRNA and to its cleavage to mature 18S rRNA. In Phaeosphaeria nodorum (strain SN15 / ATCC MYA-4574 / FGSC 10173) (Glume blotch fungus), this protein is ATP-dependent rRNA helicase RRP3.